A 628-amino-acid polypeptide reads, in one-letter code: Chaperone protein HtpG (628 aa).

The interval 1–339 (MSNNQQTLGF…SNDLPLNVSR (339 aa)) is a; substrate-binding. The segment at 340–556 (EILQDNKTTA…NDQMTTQMAK (217 aa)) is b. The interval 557-628 (LFAMSGQPVP…IKRVNTLLAG (72 aa)) is c.

Belongs to the heat shock protein 90 family. Homodimer.

Its subcellular location is the cytoplasm. In terms of biological role, molecular chaperone. Has ATPase activity. This Actinobacillus succinogenes (strain ATCC 55618 / DSM 22257 / CCUG 43843 / 130Z) protein is Chaperone protein HtpG.